The following is a 596-amino-acid chain: Chaperone protein DnaK (596 aa).

Position 180 is a phosphothreonine; by autocatalysis (Thr180).

This sequence belongs to the heat shock protein 70 family.

Functionally, acts as a chaperone. This Thermotoga neapolitana (strain ATCC 49049 / DSM 4359 / NBRC 107923 / NS-E) protein is Chaperone protein DnaK.